The sequence spans 414 residues: Ferredoxin--NAD(P)(+) reductase fdr (414 aa).

An FAD-binding site is contributed by 7–38 (DVVIVGAGHGGAQTAIALRQNGFAGTIAIIGA). 149–177 (KVVIIGGGYIGLEAAAVMAKFGKNVTLIE) serves as a coordination point for NAD(+).

It belongs to the FAD-dependent oxidoreductase family. As to quaternary structure, monomer. Carbazole 1,9a-dioxygenase complex consists of a terminal oxygenase component CarAa, a ferredoxin reductase component fdr and a ferredoxin component CarAc. The cofactor is FAD.

It carries out the reaction 2 reduced [2Fe-2S]-[ferredoxin] + NAD(+) + H(+) = 2 oxidized [2Fe-2S]-[ferredoxin] + NADH. It catalyses the reaction 2 reduced [2Fe-2S]-[ferredoxin] + NADP(+) + H(+) = 2 oxidized [2Fe-2S]-[ferredoxin] + NADPH. Its function is as follows. Part of the multicomponent carbazole 1,9a-dioxygenase (CARDO), that converts carbazole (CAR) into 2-aminobiphenyl-2,3-diol. This Sphingomonas sp protein is Ferredoxin--NAD(P)(+) reductase fdr (fdr).